The chain runs to 274 residues: Large ribosomal subunit protein uL2cz/uL2cy (274 aa).

A compositionally biased stretch (polar residues) spans 1-15 (MAINLYKTSTPSTRN). 2 disordered regions span residues 1 to 22 (MAIN…DSQV) and 225 to 274 (PVDH…RRSK).

The protein belongs to the universal ribosomal protein uL2 family. Part of the 50S ribosomal subunit.

The protein resides in the plastid. It localises to the chloroplast. This Lobularia maritima (Sweet alyssum) protein is Large ribosomal subunit protein uL2cz/uL2cy (rpl2-A).